The sequence spans 319 residues: NADH-cytochrome b5 reductase 2 (319 aa).

Residues 30-46 traverse the membrane as a helical segment; it reads LAPVYLTVGLAGLGVGL. The FAD-binding FR-type domain occupies 69–173; the sequence is QGWVDLKLSE…KGPLPKYPWE (105 aa). FAD is bound at residue 176–211; sequence KHQHICLIAGGTGITPMYQLARHIFKNPEDKTKVTL.

The protein belongs to the flavoprotein pyridine nucleotide cytochrome reductase family. The cofactor is FAD.

Its subcellular location is the mitochondrion outer membrane. It catalyses the reaction 2 Fe(III)-[cytochrome b5] + NADH = 2 Fe(II)-[cytochrome b5] + NAD(+) + H(+). In terms of biological role, may mediate the reduction of outer membrane cytochrome b5. This Aspergillus terreus (strain NIH 2624 / FGSC A1156) protein is NADH-cytochrome b5 reductase 2 (mcr1).